The chain runs to 1330 residues: Ubinuclein-2 (1330 aa).

The interval 1–113 (MAEPRRVAFI…PPPRPPKETV (113 aa)) is disordered. Serine 13 carries the phosphoserine modification. 2 stretches are compositionally biased toward basic and acidic residues: residues 16–31 (RRREADFAGAEREPPR) and 55–67 (ARDKPLPQREVSR). The span at 81–96 (PEPPPPPLPLQTPPPR) shows a compositional bias: pro residues. Residue threonine 229 is modified to Phosphothreonine. Serine 236 bears the Phosphoserine mark. 2 disordered regions span residues 236-304 (SDTE…KKRY) and 322-345 (DALKKESTPKVPVIPSTSSLPKPP). Phosphothreonine is present on threonine 238. A Glycyl lysine isopeptide (Lys-Gly) (interchain with G-Cter in SUMO2) cross-link involves residue lysine 258. Serine 297 is modified (phosphoserine). Serine 402, serine 405, serine 408, and serine 570 each carry phosphoserine. Disordered regions lie at residues 559-583 (LQADEEREKNGSDDDDDEKPGKRVI), 767-789 (NKGPSVSSRLNVPTTKPRPGLRE), 801-835 (LATPKKLDSPQTAHSSSLIAGHTGPVPKKPQDLAH), 866-909 (GLQR…SLTQ), 964-991 (YRLPLSTPSPGNGSQGSHPLVSRTAPST), 1021-1202 (PKLA…SSVV), and 1292-1330 (PGTQHAATLPHSPLPTHLQQAFNDGGQSKGDTKLPRKPQ). Residues 560–570 (QADEEREKNGS) show a composition bias toward basic and acidic residues. Polar residues-rich tracts occupy residues 767 to 780 (NKGPSVSSRLNVPT) and 809 to 818 (SPQTAHSSSL). The span at 866–895 (GLQRSSQIHASSSQTHVSSSQAQAAASSHA) shows a compositional bias: low complexity. Composition is skewed to polar residues over residues 899–909 (SEAQDASSLTQ) and 969–980 (STPSPGNGSQGS). Residues 1030-1044 (ATSPKPLTSPKPSVS) are compositionally biased toward pro residues. The segment covering 1045 to 1056 (PKPSLSAKPSVS) has biased composition (low complexity). Lysine 1052 is subject to N6-acetyllysine. Composition is skewed to polar residues over residues 1073-1148 (PSSS…NSLS), 1158-1169 (RGSNLNSSGANR), and 1308-1317 (HLQQAFNDGG). Serine 1107 carries the phosphoserine modification. Lysine 1132 bears the N6-acetyllysine mark. Residues 1321–1330 (GDTKLPRKPQ) show a composition bias toward basic and acidic residues.

This sequence belongs to the ubinuclein family.

The sequence is that of Ubinuclein-2 (Ubn2) from Rattus norvegicus (Rat).